We begin with the raw amino-acid sequence, 77 residues long: Protein NS4 (77 aa).

It localises to the host cytoplasm. The protein localises to the host nucleus. Its subcellular location is the host nucleolus. Functionally, may function as a nucleic acid binding protein that modulates transcription of genes participating in the IFN response. This chain is Protein NS4 (Segment-9), found in Antilocapra americana (Pronghorn).